We begin with the raw amino-acid sequence, 105 residues long: Probable tetrachloroethene reductive dehalogenase membrane anchor protein (105 aa).

3 helical membrane passes run 3-23 (IYDV…QYGI), 35-55 (IPLQ…LAWG), and 66-86 (AIGM…IITY).

This sequence belongs to the PceB family.

It is found in the cell membrane. In terms of biological role, may act as a membrane anchor for the tetrachloroethene reductive dehalogenase PceA. The chain is Probable tetrachloroethene reductive dehalogenase membrane anchor protein from Dehalobacter restrictus (strain DSM 9455 / PER-K23).